The chain runs to 303 residues: UDP-3-O-acyl-N-acetylglucosamine deacetylase (303 aa).

Histidine 78, histidine 237, and aspartate 241 together coordinate Zn(2+). The active-site Proton donor is histidine 264.

It belongs to the LpxC family. It depends on Zn(2+) as a cofactor.

It catalyses the reaction a UDP-3-O-[(3R)-3-hydroxyacyl]-N-acetyl-alpha-D-glucosamine + H2O = a UDP-3-O-[(3R)-3-hydroxyacyl]-alpha-D-glucosamine + acetate. It participates in glycolipid biosynthesis; lipid IV(A) biosynthesis; lipid IV(A) from (3R)-3-hydroxytetradecanoyl-[acyl-carrier-protein] and UDP-N-acetyl-alpha-D-glucosamine: step 2/6. Catalyzes the hydrolysis of UDP-3-O-myristoyl-N-acetylglucosamine to form UDP-3-O-myristoylglucosamine and acetate, the committed step in lipid A biosynthesis. The protein is UDP-3-O-acyl-N-acetylglucosamine deacetylase of Pseudomonas fluorescens (strain Pf0-1).